The sequence spans 566 residues: Putative ankyrin repeat protein RF_0987 (566 aa).

Disordered stretches follow at residues 61–118, 276–314, and 355–392; these read KKKN…HENS, PPVMPTNQPSTQPITPPSPNTPVTTPSKVVPTTDSSAEI, and VNNNQTTNNQEKSPPVSSSNVTIQKQDDKVNNETSEST. A compositionally biased stretch (basic and acidic residues) spans 78–92; it reads NQEEPKLASQEHTEA. Residues 101–112 show a composition bias toward polar residues; that stretch reads TGNTALPSVTAS. The segment covering 296 to 308 has biased composition (low complexity); sequence TPVTTPSKVVPTT. Positions 365–378 are enriched in polar residues; the sequence is EKSPPVSSSNVTIQ. ANK repeat units lie at residues 506 to 535 and 539 to 566; these read SGETLLTAAIYNDNYYLAKFLVIRGIKIST and ECQYPLDIALAQGNANIACMLIKAKGYQ.

This chain is Putative ankyrin repeat protein RF_0987, found in Rickettsia felis (strain ATCC VR-1525 / URRWXCal2) (Rickettsia azadi).